The primary structure comprises 149 residues: MIDKLIEIIRPVVESLGYEFYHIEIVKEDGERYLRVYIDKENGISLDDCEKVSRAISDLLDEKDPIPYSYYLEVSSPGIYRTLFTEEHLKKYIGNTVDIKLKSSLEKSTNYSGKLIDVNEEDIVIVVSDNREFKIPRKKIKKICLSGEF.

The protein belongs to the RimP family.

It is found in the cytoplasm. In terms of biological role, required for maturation of 30S ribosomal subunits. This chain is Ribosome maturation factor RimP, found in Clostridium acetobutylicum (strain ATCC 824 / DSM 792 / JCM 1419 / IAM 19013 / LMG 5710 / NBRC 13948 / NRRL B-527 / VKM B-1787 / 2291 / W).